The primary structure comprises 281 residues: Energy-coupling factor transporter ATP-binding protein EcfA1 (281 aa).

The 237-residue stretch at 6-242 (IDVKHLDYRY…GEALIKMGLD (237 aa)) folds into the ABC transporter domain. 42–49 (GHNGSGKS) is an ATP binding site.

The protein belongs to the ABC transporter superfamily. Energy-coupling factor EcfA family. As to quaternary structure, forms a stable energy-coupling factor (ECF) transporter complex composed of 2 membrane-embedded substrate-binding proteins (S component), 2 ATP-binding proteins (A component) and 2 transmembrane proteins (T component).

It is found in the cell membrane. Functionally, ATP-binding (A) component of a common energy-coupling factor (ECF) ABC-transporter complex. Unlike classic ABC transporters this ECF transporter provides the energy necessary to transport a number of different substrates. In Lactiplantibacillus plantarum (strain ATCC BAA-793 / NCIMB 8826 / WCFS1) (Lactobacillus plantarum), this protein is Energy-coupling factor transporter ATP-binding protein EcfA1.